Consider the following 258-residue polypeptide: Homeobox protein VENTX (258 aa).

The span at 1-32 (MRLSSSPPRGPQQLSSFGSVDWLSQSSCSGPT) shows a compositional bias: polar residues. Disordered regions lie at residues 1-93 (MRLS…RAPR) and 227-248 (SHPPTPGRPSLGPALSTGPRGL). Positions 91 to 150 (APRVRTAFTMEQVRTLEGVFQHHQYLSPLERKRLAREMQLSEVQIKTWFQNRRMKHKRQM) form a DNA-binding region, homeobox.

In terms of tissue distribution, expressed in bone marrow of patients recovering from chemotherapy. Also expressed in an erythroleukemia cell line.

The protein localises to the nucleus. May be involved in ventralization. The protein is Homeobox protein VENTX (VENTX) of Homo sapiens (Human).